A 297-amino-acid polypeptide reads, in one-letter code: Ribonuclease HIII (297 aa).

Positions 81–297 constitute an RNase H type-2 domain; it reads IPIIGTDEVG…NTKKAQALLK (217 aa). The a divalent metal cation site is built by D87, E88, and D192.

This sequence belongs to the RNase HII family. RnhC subfamily. The cofactor is Mn(2+). It depends on Mg(2+) as a cofactor.

The protein localises to the cytoplasm. It catalyses the reaction Endonucleolytic cleavage to 5'-phosphomonoester.. Its function is as follows. Endonuclease that specifically degrades the RNA of RNA-DNA hybrids. This chain is Ribonuclease HIII, found in Streptococcus agalactiae serotype III (strain NEM316).